A 171-amino-acid chain; its full sequence is Peptide deformylase (171 aa).

2 residues coordinate Fe cation: C87 and H129. E130 is a catalytic residue. H133 serves as a coordination point for Fe cation.

This sequence belongs to the polypeptide deformylase family. Fe(2+) serves as cofactor.

It catalyses the reaction N-terminal N-formyl-L-methionyl-[peptide] + H2O = N-terminal L-methionyl-[peptide] + formate. In terms of biological role, removes the formyl group from the N-terminal Met of newly synthesized proteins. Requires at least a dipeptide for an efficient rate of reaction. N-terminal L-methionine is a prerequisite for activity but the enzyme has broad specificity at other positions. This chain is Peptide deformylase, found in Pseudothermotoga lettingae (strain ATCC BAA-301 / DSM 14385 / NBRC 107922 / TMO) (Thermotoga lettingae).